We begin with the raw amino-acid sequence, 216 residues long: Probable GH family 25 lysozyme 5 (216 aa).

A signal peptide spans 1–20; it reads MRFIISLLFVFTLIFNLAFS. Residues 21 to 216 enclose the Ch-type lysozyme domain; that stretch reads HIGIDVSSGT…GLGIDKNYWE (196 aa). The active site involves D25. An N-linked (GlcNAc...) asparagine glycan is attached at N31. Residues D113 and E115 contribute to the active site.

This sequence belongs to the glycosyl hydrolase 25 family.

Its subcellular location is the secreted. It carries out the reaction Hydrolysis of (1-&gt;4)-beta-linkages between N-acetylmuramic acid and N-acetyl-D-glucosamine residues in a peptidoglycan and between N-acetyl-D-glucosamine residues in chitodextrins.. The protein is Probable GH family 25 lysozyme 5 of Dictyostelium discoideum (Social amoeba).